Here is a 352-residue protein sequence, read N- to C-terminus: Phospho-N-acetylmuramoyl-pentapeptide-transferase (352 aa).

Helical transmembrane passes span 16-36 (YITF…LLFM), 66-86 (TPTM…LLCA), 88-108 (LNNL…LIGL), 129-149 (MLYL…FGME), 160-180 (PLLS…VATS), 191-211 (GLAT…VYIA), 228-248 (SGEA…FLWF), 255-275 (LFMG…MAII), 280-300 (FLLF…ILQI), and 329-349 (KIIV…LLTL).

This sequence belongs to the glycosyltransferase 4 family. MraY subfamily. The cofactor is Mg(2+).

The protein localises to the cell inner membrane. It carries out the reaction UDP-N-acetyl-alpha-D-muramoyl-L-alanyl-gamma-D-glutamyl-meso-2,6-diaminopimeloyl-D-alanyl-D-alanine + di-trans,octa-cis-undecaprenyl phosphate = di-trans,octa-cis-undecaprenyl diphospho-N-acetyl-alpha-D-muramoyl-L-alanyl-D-glutamyl-meso-2,6-diaminopimeloyl-D-alanyl-D-alanine + UMP. The protein operates within cell wall biogenesis; peptidoglycan biosynthesis. Its function is as follows. Catalyzes the initial step of the lipid cycle reactions in the biosynthesis of the cell wall peptidoglycan: transfers peptidoglycan precursor phospho-MurNAc-pentapeptide from UDP-MurNAc-pentapeptide onto the lipid carrier undecaprenyl phosphate, yielding undecaprenyl-pyrophosphoryl-MurNAc-pentapeptide, known as lipid I. The chain is Phospho-N-acetylmuramoyl-pentapeptide-transferase from Wolinella succinogenes (strain ATCC 29543 / DSM 1740 / CCUG 13145 / JCM 31913 / LMG 7466 / NCTC 11488 / FDC 602W) (Vibrio succinogenes).